The primary structure comprises 297 residues: MFTGSLVALVTPMHIDGSIDWQALEALINWHIASQTQAIVVAGTTGEAATLTLDEHKAIMRFCVDIANDRIPIIAGAGANATARAIELTLAAYHCGCAASLQVTPYYNRPPQRGLYAHFAKIAAAAPLPMILYNVPTRTACDIALETVTALAKITHIIGIKEATPHARLAQIRQLFPKNQSFKIYGGEDALCAQAACEGLIDGVISVTANVAPEAMQNMMHCALNGDLKQAQAINQRLAALHESLFCETNPIAVKWALQRMGKIAAGIRLPLMPLDERWHESLTAALVAAGITIQTH.

Thr-45 contributes to the pyruvate binding site. The active-site Proton donor/acceptor is the Tyr-133. The active-site Schiff-base intermediate with substrate is the Lys-161. Ile-205 contributes to the pyruvate binding site.

It belongs to the DapA family. Homotetramer; dimer of dimers.

The protein localises to the cytoplasm. The catalysed reaction is L-aspartate 4-semialdehyde + pyruvate = (2S,4S)-4-hydroxy-2,3,4,5-tetrahydrodipicolinate + H2O + H(+). Its pathway is amino-acid biosynthesis; L-lysine biosynthesis via DAP pathway; (S)-tetrahydrodipicolinate from L-aspartate: step 3/4. Catalyzes the condensation of (S)-aspartate-beta-semialdehyde [(S)-ASA] and pyruvate to 4-hydroxy-tetrahydrodipicolinate (HTPA). The chain is 4-hydroxy-tetrahydrodipicolinate synthase from Dichelobacter nodosus (strain VCS1703A).